A 60-amino-acid polypeptide reads, in one-letter code: Large ribosomal subunit protein uL30 (60 aa).

The protein belongs to the universal ribosomal protein uL30 family. As to quaternary structure, part of the 50S ribosomal subunit.

The polypeptide is Large ribosomal subunit protein uL30 (Streptococcus gordonii (strain Challis / ATCC 35105 / BCRC 15272 / CH1 / DL1 / V288)).